The chain runs to 215 residues: Golgi-associated RAB2 interactor protein 5A (215 aa).

Disordered stretches follow at residues 1-20 (MKRG…AGPG) and 174-215 (QDYS…LWGL). The segment covering 178–191 (ALEDDEDDDEDEDR) has biased composition (acidic residues).

This sequence belongs to the GARIN family. In terms of assembly, interacts (via N-terminus) with RAB2B (in GTP-bound form).

It localises to the golgi apparatus. RAB2B effector protein which promotes cytosolic DNA-induced innate immune responses. Regulates IFN responses against DNA viruses by regulating the CGAS-STING signaling axis. The polypeptide is Golgi-associated RAB2 interactor protein 5A (GARIN5A) (Bos taurus (Bovine)).